The primary structure comprises 309 residues: Acetyl-coenzyme A carboxylase carboxyl transferase subunit beta (309 aa).

Positions 29-298 (NSDWTSCCKG…AINSSENETS (270 aa)) constitute a CoA carboxyltransferase N-terminal domain. The Zn(2+) site is built by cysteine 35, cysteine 36, cysteine 52, and cysteine 55.

Belongs to the AccD/PCCB family. As to quaternary structure, acetyl-CoA carboxylase is a heterohexamer composed of biotin carboxyl carrier protein (AccB), biotin carboxylase (AccC) and two subunits each of ACCase subunit alpha (AccA) and ACCase subunit beta (AccD). It depends on Zn(2+) as a cofactor.

Its subcellular location is the cytoplasm. The catalysed reaction is N(6)-carboxybiotinyl-L-lysyl-[protein] + acetyl-CoA = N(6)-biotinyl-L-lysyl-[protein] + malonyl-CoA. It functions in the pathway lipid metabolism; malonyl-CoA biosynthesis; malonyl-CoA from acetyl-CoA: step 1/1. In terms of biological role, component of the acetyl coenzyme A carboxylase (ACC) complex. Biotin carboxylase (BC) catalyzes the carboxylation of biotin on its carrier protein (BCCP) and then the CO(2) group is transferred by the transcarboxylase to acetyl-CoA to form malonyl-CoA. The protein is Acetyl-coenzyme A carboxylase carboxyl transferase subunit beta of Pelagibacter ubique (strain HTCC1062).